The primary structure comprises 823 residues: Tax1-binding protein 1 homolog B (823 aa).

Residues 149 to 487 (VTTKASYLEQ…QKQVVKFNEQ (339 aa)) adopt a coiled-coil conformation. Disordered stretches follow at residues 342–377 (HRQL…QQAN) and 486–519 (EQQG…STSD). A compositionally biased stretch (basic and acidic residues) spans 356–368 (KALREQLRQKEEQ). The segment covering 498–518 (AAAGPLSASPEASAPGSPSTS) has biased composition (low complexity). Residues 548–638 (QMLNEERERC…NREEEQKDSN (91 aa)) are a coiled coil. Residues 650–746 (MPYAQDDPSP…EPAAPEPAEF (97 aa)) form a disordered region. Positions 723 to 739 (LEEPEEPQSTQNDDEPA) are enriched in acidic residues. UBZ1-type zinc fingers lie at residues 762 to 788 (QKRC…VESH) and 789 to 815 (WKIC…VLTH). The Zn(2+) site is built by cysteine 765, cysteine 768, histidine 784, histidine 788, cysteine 792, cysteine 795, histidine 811, and histidine 815.

Expressed at relatively high levels in both proximal and distal regions of the fin bud during pectoral fin development.

In terms of biological role, may have anti-apoptotic activity. In Danio rerio (Zebrafish), this protein is Tax1-binding protein 1 homolog B (tax1bp1b).